The following is a 542-amino-acid chain: Sterile alpha motif domain-containing protein 11 (542 aa).

The disordered stretch occupies residues 268 to 364 (LLALPPQGPP…GRGLLSGSTL (97 aa)). A compositionally biased stretch (pro residues) spans 273 to 285 (PQGPPGPGPPIPP). A Phosphothreonine modification is found at T342. The 66-residue stretch at 404–469 (WTVDDVCNFV…AQVAKRLGRV (66 aa)) folds into the SAM domain. Residues 486 to 542 (LQAPELSPGHQPLSPATTTSPYEGTHLPTGQASPKQENGSGTIALLSGAPDPSQLLQ) form a disordered region. A Phosphoserine modification is found at S499. A compositionally biased stretch (polar residues) spans 499-526 (SPATTTSPYEGTHLPTGQASPKQENGSG).

Self-associates. Component of a Polycomb group (PcG) multiprotein PRC1-like complex. Interacts with SAMD7 and PHC2. As to expression, expressed in the outer nuclear layer of rod photoreceptors in the retina (at protein level). Predominantly expressed in retinal photoreceptors and pineal gland.

It is found in the nucleus. Its function is as follows. Component of a Polycomb group (PcG) multiprotein PRC1-like complex, essential for establishing rod photoreceptor cell identity and function by silencing nonrod gene expression in developing rod photoreceptor cells. This is Sterile alpha motif domain-containing protein 11 (Samd11) from Mus musculus (Mouse).